Consider the following 60-residue polypeptide: MADLKITLIKSAAHRLPKQRAIVKSLGLGRVSSSVVKPNNEATRGAIFHIAHLVSVEEVK.

This sequence belongs to the universal ribosomal protein uL30 family. Part of the 50S ribosomal subunit.

The sequence is that of Large ribosomal subunit protein uL30 from Leuconostoc citreum (strain KM20).